Reading from the N-terminus, the 302-residue chain is Adipolin (302 aa).

The signal sequence occupies residues 1 to 20 (MRRWAWAAVVVLLGPQLVLL). Disordered regions lie at residues 28–68 (EAQR…GPEF) and 86–110 (ALRKRCGSRDKKPRDLFGPPGPPGA). Residue Asn43 is glycosylated (N-linked (GlcNAc...) asparagine). A compositionally biased stretch (basic and acidic residues) spans 86 to 100 (ALRKRCGSRDKKPRD). Residues 147 to 302 (LRLVGEAFHC…SSFSGLLLGT (156 aa)) enclose the C1q domain.

This sequence belongs to the adipolin/erythroferrone family. Homomultimer; disulfide-linked. May interact with ERFE. Processed into Adipolin fC1QTNF12 and Adipolin gC1QTNF12 by FURIN. Insulin enhances endogenous C1QTNF12 cleavage. As to expression, predominantly expressed by adipose tissues.

The protein resides in the secreted. Its function is as follows. Insulin-sensitizing adipocyte-secreted protein (adipokine) that regulates glucose metabolism in liver and adipose tissue. Promotes glucose uptake in adipocytes and suppresses de novo glucose production in hepatocytes via the PI3K-Akt signaling pathway. Administration lead to reduction of blood glucose. Able to attenuate inflammation in fat tissue. The polypeptide is Adipolin (Homo sapiens (Human)).